A 131-amino-acid chain; its full sequence is Small ribosomal subunit protein uS8 (131 aa).

It belongs to the universal ribosomal protein uS8 family. Part of the 30S ribosomal subunit. Contacts proteins S5 and S12.

Its function is as follows. One of the primary rRNA binding proteins, it binds directly to 16S rRNA central domain where it helps coordinate assembly of the platform of the 30S subunit. This chain is Small ribosomal subunit protein uS8, found in Nitrosomonas eutropha (strain DSM 101675 / C91 / Nm57).